The chain runs to 224 residues: Charged multivesicular body protein 4b (224 aa).

A disordered region spans residues M1–Q23. Position 2 is an N-acetylserine (S2). Position 6 is an N6-acetyllysine (K6). Residues F8–G19 show a composition bias toward gly residues. The stretch at Q23–I183 forms a coiled coil. K114 is modified (N6-acetyllysine). Phosphoserine occurs at positions 184 and 223. Residues G185–M224 form a disordered region.

Belongs to the SNF7 family. In terms of assembly, probable core component of the endosomal sorting required for transport complex III (ESCRT-III). ESCRT-III components are thought to multimerize to form a flat lattice on the perimeter membrane of the endosome. Several assembly forms of ESCRT-III may exist that interact and act sequentially. Interacts with CHMP6 and CHMP4C. Interacts with PDCD6IP; the interaction is direct. Interacts with VPS4A; the interaction is direct. Interacts with VPS4B; the interaction is direct. Interacts with CHMP7. Interacts with CFTR; the interaction requires misfolded CFTR. Interacts with PTPN23. Interacts with CC2D1B. In terms of processing, ISGylated. Isgylation weakens its interaction with VPS4A. As to expression, widely expressed. Expressed at higher level in heart and skeletal muscle. Also expressed in brain, colon, thymus, spleen, kidney, liver, small intestine, placenta, lung and peripheral blood lymphocytes.

The protein resides in the cytoplasm. It is found in the cytosol. Its subcellular location is the late endosome membrane. The protein localises to the midbody. It localises to the nucleus envelope. Probable core component of the endosomal sorting required for transport complex III (ESCRT-III) which is involved in multivesicular bodies (MVBs) formation and sorting of endosomal cargo proteins into MVBs. MVBs contain intraluminal vesicles (ILVs) that are generated by invagination and scission from the limiting membrane of the endosome and mostly are delivered to lysosomes enabling degradation of membrane proteins, such as stimulated growth factor receptors, lysosomal enzymes and lipids. The MVB pathway appears to require the sequential function of ESCRT-O, -I,-II and -III complexes. ESCRT-III proteins mostly dissociate from the invaginating membrane before the ILV is released. The ESCRT machinery also functions in topologically equivalent membrane fission events, such as the terminal stages of cytokinesis. Together with SPAST, the ESCRT-III complex promotes nuclear envelope sealing and mitotic spindle disassembly during late anaphase. Plays a role in the endosomal sorting pathway. ESCRT-III proteins are believed to mediate the necessary vesicle extrusion and/or membrane fission activities, possibly in conjunction with the AAA ATPase VPS4. When overexpressed, membrane-assembled circular arrays of CHMP4B filaments can promote or stabilize negative curvature and outward budding. CHMP4A/B/C are required for the exosomal release of SDCBP, CD63 and syndecan. Majority of the protein exists in a folded closed conformation. In terms of biological role, (Microbial infection) The ESCRT machinery also functions in topologically equivalent membrane fission events, such as the budding of enveloped viruses (HIV-1 and other lentiviruses). Via its interaction with PDCD6IP involved in HIV-1 p6- and p9-dependent virus release. The protein is Charged multivesicular body protein 4b (CHMP4B) of Homo sapiens (Human).